The primary structure comprises 254 residues: Vitamin B12 import ATP-binding protein BtuD (254 aa).

Positions Met1–Pro239 constitute an ABC transporter domain. Gly29 to Ser36 is a binding site for ATP.

The protein belongs to the ABC transporter superfamily. Vitamin B12 importer (TC 3.A.1.13.1) family. The complex is composed of two ATP-binding proteins (BtuD), two transmembrane proteins (BtuC) and a solute-binding protein (BtuF).

The protein localises to the cell inner membrane. It catalyses the reaction an R-cob(III)alamin(out) + ATP + H2O = an R-cob(III)alamin(in) + ADP + phosphate + H(+). In terms of biological role, part of the ABC transporter complex BtuCDF involved in vitamin B12 import. Responsible for energy coupling to the transport system. This chain is Vitamin B12 import ATP-binding protein BtuD, found in Vibrio vulnificus (strain YJ016).